A 161-amino-acid polypeptide reads, in one-letter code: RNA pyrophosphohydrolase (161 aa).

One can recognise a Nudix hydrolase domain in the interval Gly6–Arg149. Positions Gly38–Gly59 match the Nudix box motif.

It belongs to the Nudix hydrolase family. RppH subfamily. Requires a divalent metal cation as cofactor.

Accelerates the degradation of transcripts by removing pyrophosphate from the 5'-end of triphosphorylated RNA, leading to a more labile monophosphorylated state that can stimulate subsequent ribonuclease cleavage. This Hahella chejuensis (strain KCTC 2396) protein is RNA pyrophosphohydrolase.